The primary structure comprises 235 residues: Ubiquinone/menaquinone biosynthesis C-methyltransferase UbiE (235 aa).

S-adenosyl-L-methionine contacts are provided by Thr60 and Asp81.

Belongs to the class I-like SAM-binding methyltransferase superfamily. MenG/UbiE family.

It carries out the reaction a 2-demethylmenaquinol + S-adenosyl-L-methionine = a menaquinol + S-adenosyl-L-homocysteine + H(+). The enzyme catalyses a 2-methoxy-6-(all-trans-polyprenyl)benzene-1,4-diol + S-adenosyl-L-methionine = a 5-methoxy-2-methyl-3-(all-trans-polyprenyl)benzene-1,4-diol + S-adenosyl-L-homocysteine + H(+). The protein operates within quinol/quinone metabolism; menaquinone biosynthesis; menaquinol from 1,4-dihydroxy-2-naphthoate: step 2/2. It functions in the pathway cofactor biosynthesis; ubiquinone biosynthesis. Functionally, methyltransferase required for the conversion of demethylmenaquinol (DMKH2) to menaquinol (MKH2) and the conversion of 2-polyprenyl-6-methoxy-1,4-benzoquinol (DDMQH2) to 2-polyprenyl-3-methyl-6-methoxy-1,4-benzoquinol (DMQH2). This Geotalea uraniireducens (strain Rf4) (Geobacter uraniireducens) protein is Ubiquinone/menaquinone biosynthesis C-methyltransferase UbiE.